We begin with the raw amino-acid sequence, 1344 residues long: Period circadian protein homolog 2 (1344 aa).

2 disordered regions span residues 1 to 21 (MDCI…PEQQ) and 42 to 112 (EYSG…NGKD). Positions 10-21 (YSSTEEQNPEQQ) are enriched in polar residues. Over residues 78–89 (SSGSSGNDFSGN) the composition is skewed to low complexity. Over residues 99-111 (HDSHGHESDENGK) the composition is skewed to basic and acidic residues. The short motif at 161 to 170 (LLKTLQELKA) is the Nuclear export signal 1 element. A PAS 1 domain is found at 231–298 (ITSEYIMKNA…FYTSTTPYRL (68 aa)). Positions 358–362 (LCCVL) match the LXXLL motif. Residues 371–437 (YEAPRIPPDK…MLAIHKKILQ (67 aa)) enclose the PAS 2 domain. The PAC domain occupies 445-488 (YSPIRFCTRNGDYITMDTSWSSFINPWSRKVSFIIGRHKVRTGP). The Nuclear export signal 2 signature appears at 512-521 (ITEQIYRLLL). Disordered regions lie at residues 531–609 (GYGS…QVKD), 661–686 (AKRK…NAIQ), 823–894 (LQDK…WSPS), 1038–1065 (TETR…PLFQ), and 1107–1126 (TTDA…MDAQ). Residues 549 to 559 (SSSDSTGNNND) show a composition bias toward low complexity. 2 stretches are compositionally biased toward basic and acidic residues: residues 560–573 (DTQK…DARK) and 583–597 (TENK…EPSA). Residues 667–684 (PSSSVNSSVHEQKASVNA) show a composition bias toward polar residues. A compositionally biased stretch (basic and acidic residues) spans 825 to 836 (DKPKGRPGERGG). The Nuclear localization signal signature appears at 851 to 865 (KKSGKNRKSKRIKPQ). The span at 852–862 (KSGKNRKSKRI) shows a compositional bias: basic residues. Polar residues-rich tracts occupy residues 865–875 (QESSDSTTSGT), 885–894 (GLNTTAWSPS), and 1045–1059 (SRSC…QDQA). The short motif at 1138-1142 (LDILL) is the LXXLL element. The segment covering 1149 to 1172 (GTGSASSGSGVSAAAESLGSGSNG) has biased composition (low complexity). Residues 1149-1197 (GTGSASSGSGVSAAAESLGSGSNGCDMSGSRTGSSETSHTSKYFGSIDS) are disordered. Residues 1177 to 1197 (GSRTGSSETSHTSKYFGSIDS) are compositionally biased toward polar residues. Positions 1244–1344 (SRDLETVLKE…PLSQVNEEQT (101 aa)) are CRY binding domain.

As to quaternary structure, component of the circadian clock oscillator which includes the CRY proteins, CLOCK or NPAS2, BMAL1 or BMAL2, CSNK1E, and the PER proteins. Interacts directly with PER3, and through a C-terminal domain, with CRY1 and CRY2.

The protein localises to the nucleus. The protein resides in the cytoplasm. Its function is as follows. Transcriptional repressor which forms a core component of the circadian clock. The circadian clock, an internal time-keeping system, regulates various physiological processes through the generation of approximately 24 hour circadian rhythms in gene expression, which are translated into rhythms in metabolism and behavior. It is derived from the Latin roots 'circa' (about) and 'diem' (day) and acts as an important regulator of a wide array of physiological functions including metabolism, sleep, body temperature, blood pressure, endocrine, immune, cardiovascular, and renal function. Consists of two major components: the central clock, residing in the suprachiasmatic nucleus (SCN) of the brain, and the peripheral clocks that are present in nearly every tissue and organ system. Both the central and peripheral clocks can be reset by environmental cues, also known as Zeitgebers (German for 'timegivers'). The predominant Zeitgeber for the central clock is light, which is sensed by retina and signals directly to the SCN. The central clock entrains the peripheral clocks through neuronal and hormonal signals, body temperature and feeding-related cues, aligning all clocks with the external light/dark cycle. Circadian rhythms allow an organism to achieve temporal homeostasis with its environment at the molecular level by regulating gene expression to create a peak of protein expression once every 24 hours to control when a particular physiological process is most active with respect to the solar day. Transcription and translation of core clock components (CLOCK, NPAS2, BMAL1, BMAL2, PER1, PER2, PER3, CRY1 and CRY2) plays a critical role in rhythm generation, whereas delays imposed by post-translational modifications (PTMs) are important for determining the period (tau) of the rhythms (tau refers to the period of a rhythm and is the length, in time, of one complete cycle). A diurnal rhythm is synchronized with the day/night cycle, while the ultradian and infradian rhythms have a period shorter and longer than 24 hours, respectively. Disruptions in the circadian rhythms contribute to the pathology of cardiovascular diseases, cancer, metabolic syndrome and aging. A transcription/translation feedback loop (TTFL) forms the core of the molecular circadian clock mechanism. Transcription factors, CLOCK or NPAS2 and BMAL1 or BMAL2, form the positive limb of the feedback loop, act in the form of a heterodimer and activate the transcription of core clock genes and clock-controlled genes (involved in key metabolic processes), harboring E-box elements (5'-CACGTG-3') within their promoters. The core clock genes: PER1/2/3 and CRY1/2 which are transcriptional repressors form the negative limb of the feedback loop and interact with the CLOCK|NPAS2-BMAL1|BMAL2 heterodimer inhibiting its activity and thereby negatively regulating their own expression. This heterodimer also activates nuclear receptors NR1D1/2 and RORA/B/G, which form a second feedback loop and which activate and repress BMAL1 transcription, respectively. PER1 and PER2 proteins transport CRY1 and CRY2 into the nucleus with appropriate circadian timing, but also contribute directly to repression of clock-controlled target genes through interaction with several classes of RNA-binding proteins, helicases and others transcriptional repressors. PER appears to regulate circadian control of transcription by at least three different modes. First, interacts directly with the CLOCK-BMAL1 at the tail end of the nascent transcript peak to recruit complexes containing the SIN3-HDAC that remodel chromatin to repress transcription. Second, brings H3K9 methyltransferases such as SUV39H1 and SUV39H2 to the E-box elements of the circadian target genes, like PER2 itself or PER1. The recruitment of each repressive modifier to the DNA seems to be very precisely temporally orchestrated by the large PER complex, the deacetylases acting before than the methyltransferases. Additionally, large PER complexes are also recruited to the target genes 3' termination site through interactions with RNA-binding proteins and helicases that may play a role in transcription termination to regulate transcription independently of CLOCK-BMAL1 interactions. This Gallus gallus (Chicken) protein is Period circadian protein homolog 2 (PER2).